The chain runs to 554 residues: Hydroxylamine reductase (554 aa).

Residues Cys-3, Cys-6, Cys-18, and Cys-25 each contribute to the [2Fe-2S] cluster site. Hybrid [4Fe-2O-2S] cluster is bound by residues His-252, Glu-276, Cys-320, Cys-408, Cys-436, Cys-461, Glu-495, and Lys-497. Cys-408 carries the cysteine persulfide modification.

Belongs to the HCP family. [2Fe-2S] cluster serves as cofactor. Requires hybrid [4Fe-2O-2S] cluster as cofactor.

The protein resides in the cytoplasm. It carries out the reaction A + NH4(+) + H2O = hydroxylamine + AH2 + H(+). In terms of biological role, catalyzes the reduction of hydroxylamine to form NH(3) and H(2)O. This Shewanella amazonensis (strain ATCC BAA-1098 / SB2B) protein is Hydroxylamine reductase.